Reading from the N-terminus, the 608-residue chain is Glutamine--fructose-6-phosphate aminotransferase [isomerizing] (608 aa).

The Nucleophile; for GATase activity role is filled by cysteine 2. A Glutamine amidotransferase type-2 domain is found at 2-217; it reads CGIVGIVGHK…DGDWAVVGKT (216 aa). 2 SIS domains span residues 283 to 422 and 456 to 598; these read TDID…ARGT and LSRE…VDQP. Residue lysine 603 is the For Fru-6P isomerization activity of the active site.

The protein localises to the cytoplasm. It catalyses the reaction D-fructose 6-phosphate + L-glutamine = D-glucosamine 6-phosphate + L-glutamate. Its function is as follows. Involved in the production of the root hair deformation (HAD) factor specifically on medicago. The sequence is that of Glutamine--fructose-6-phosphate aminotransferase [isomerizing] (nodM) from Rhizobium leguminosarum bv. viciae.